A 383-amino-acid polypeptide reads, in one-letter code: tRNA-specific 2-thiouridylase MnmA (383 aa).

ATP contacts are provided by residues 9 to 16 (GMSGGVDS) and Met-35. The interval 95-97 (NPD) is interaction with target base in tRNA. Cys-100 (nucleophile) is an active-site residue. A disulfide bridge connects residues Cys-100 and Cys-198. Gly-124 contributes to the ATP binding site. The tract at residues 148–150 (KDQ) is interaction with tRNA. The active-site Cysteine persulfide intermediate is the Cys-198. Positions 310–311 (RY) are interaction with tRNA.

The protein belongs to the MnmA/TRMU family.

Its subcellular location is the cytoplasm. The enzyme catalyses S-sulfanyl-L-cysteinyl-[protein] + uridine(34) in tRNA + AH2 + ATP = 2-thiouridine(34) in tRNA + L-cysteinyl-[protein] + A + AMP + diphosphate + H(+). Catalyzes the 2-thiolation of uridine at the wobble position (U34) of tRNA, leading to the formation of s(2)U34. The protein is tRNA-specific 2-thiouridylase MnmA of Paraburkholderia phytofirmans (strain DSM 17436 / LMG 22146 / PsJN) (Burkholderia phytofirmans).